The chain runs to 1253 residues: Structural polyprotein (1253 aa).

The host transcription inhibition stretch occupies residues 43–77; the sequence is VQAQQMQQLISAVSALTTKQNGKAPKKPKKKPQKA. The disordered stretch occupies residues 58–110; it reads LTTKQNGKAPKKPKKKPQKAKAKKNEQQKKNENKKPPPKQKNPAKKKKPGKRE. Basic residues predominate over residues 66–79; sequence APKKPKKKPQKAKA. The short motif at 70-106 is the Nuclear localization signal element; sequence PKKKPQKAKAKKNEQQKKNENKKPPPKQKNPAKKKKP. A compositionally biased stretch (basic and acidic residues) spans 80 to 92; that stretch reads KKNEQQKKNENKK. The segment at 90–121 is binding to the viral RNA; it reads NKKPPPKQKNPAKKKKPGKRERMCMKIENDCI. Basic residues predominate over residues 93–108; the sequence is PPPKQKNPAKKKKPGK. The tract at residues 106 to 120 is ribosome-binding; that stretch reads PGKRERMCMKIENDC. Residues C120 and C135 are joined by a disulfide bond. The Peptidase S3 domain occupies 120–268; the sequence is CIFEVKLDGK…RYTPEGTEEW (149 aa). H146 serves as the catalytic Charge relay system. The Nuclear export signal motif lies at 151–161; the sequence is IDNPDLAKLTY. The tract at residues 162–167 is interaction with spike glycoprotein E2; the sequence is KKSSKY. The Charge relay system role is filled by D168. A dimerization of the capsid protein region spans residues 190–200; that stretch reads PEGHYNWHHGA. S220 functions as the Charge relay system in the catalytic mechanism. The interval 226-230 is dimerization of the capsid protein; it reads DNKGR. A functions as an uncleaved signal peptide for the precursor of protein E3/E2 region spans residues 269 to 280; that stretch reads SAALMMCVLANV. 3 disulfide bridges follow: C275–C284, C289–C293, and C292–C324. N-linked (GlcNAc...) asparagine; by host glycosylation occurs at N279. N-linked (GlcNAc...) asparagine; by host glycosylation is present at N325. At 333-694 the chain is on the extracellular side; the sequence is SVTKHFNVYK…EIILYYYGLY (362 aa). Disulfide bonds link C351/C457, C354/C360, C423/C437, C485/C597, C533/C557, and C535/C552. Interaction with host Mxra8 receptor stretches follow at residues 358–361 and 394–396; these read QFCY and HEH. The interval 516-519 is interaction with host Mxra8 receptor; that stretch reads QSGN. N-linked (GlcNAc...) asparagine; by host glycosylation is present at N532. Residues 548–554 form an interaction with host Mxra8 receptor region; that stretch reads TINSCKI. N594 is a glycosylation site (N-linked (GlcNAc...) asparagine; by host). A helical transmembrane segment spans residues 695–715; it reads PAATIAAVSAAGLAVVLSLLA. Residues 716–754 are Cytoplasmic-facing; that stretch reads SCYMFATARRKCLTPYALTPGAVVPVTLGVLCCAPRAHA. C717 carries the S-stearoyl cysteine; by host lipid modification. The interval 722–726 is interaction with the capsid protein; that stretch reads TARRK. C727 is lipidated: S-stearoyl cysteine; by host. The segment at 727–747 is transient transmembrane before p62-6K protein processing; the sequence is CLTPYALTPGAVVPVTLGVLC. C727 and C748 are disulfide-bonded. Residues C747 and C748 are each lipidated (S-palmitoyl cysteine; by host). The Extracellular portion of the chain corresponds to 755–769; that stretch reads ASFAESMAYLWDENQ. A glycan (N-linked (GlcNAc...) asparagine; by host) is linked at N768. A helical transmembrane segment spans residues 770 to 790; sequence TLFWLELATPLAAIIILVCCL. The Cytoplasmic portion of the chain corresponds to 791-792; the sequence is KN. A helical membrane pass occupies residues 793–813; that stretch reads LLCCCKPLSFLVLVSLGTPVV. Extracellular-facing segments span residues 814 to 815 and 826 to 1227; these read KS and VGFP…WVQR. Disulfide bonds link C864/C929, C877/C909, C878/C911, and C883/C893. The tract at residues 899–916 is E1 fusion peptide loop; it reads VYPFMWGGAYCFCDTENT. Residues N956 and N1085 are each glycosylated (N-linked (GlcNAc...) asparagine; by host). 4 disulfides stabilise this stretch: C1074/C1086, C1116/C1191, C1121/C1195, and C1143/C1185. A helical transmembrane segment spans residues 1228-1248; that stretch reads VAGGLGGLTLAAVAVLILVTC. Residue C1248 is the site of S-palmitoyl cysteine; by host attachment. At 1249–1253 the chain is on the cytoplasmic side; the sequence is VTMRR.

In terms of assembly, homodimer. Homomultimer. Interacts with host karyopherin KPNA4; this interaction allows the nuclear import of the viral capsid protein. Interacts with spike glycoprotein E2. Interacts with host IRAK1; the interaction leads to inhibition of IRAK1-dependent signaling. As to quaternary structure, the precursor of protein E3/E2 and E1 form a heterodimer shortly after synthesis. Interacts with spike glycoprotein E2. The precursor of protein E3/E2 and E1 form a heterodimer shortly after synthesis. Processing of the precursor of protein E3/E2 into E2 and E3 results in a heterodimer of the spike glycoproteins E2 and E1. Spike at virion surface are constituted of a trimer of E2-E1 heterodimers. After target cell attachment and endocytosis, E1 change conformation to form homotrimers. Interacts with 6K protein. E1/E2 heterodimer interacts with host LDLR. In terms of assembly, interacts with spike glycoprotein E1. Processing of the precursor of protein E3/E2 into E2 and E3 results in a heterodimer of the spike glycoproteins E2 and E1. Spike at virion surface are constituted of a trimer of E2-E1 heterodimers. Interacts with 6K protein. Interacts with host MXRA8; this interaction mediates virus entry. As to quaternary structure, oligomer. Interacts with spike glycoprotein E1. Interacts with spike glycoprotein E2. Structural polyprotein: Specific enzymatic cleavages in vivo yield mature proteins. Capsid protein is auto-cleaved during polyprotein translation, unmasking a signal peptide at the N-terminus of the precursor of E3/E2. The remaining polyprotein is then targeted to the host endoplasmic reticulum, where host signal peptidase cleaves it into pE2, 6K and E1 proteins. pE2 is further processed to mature E3 and E2 by host furin in trans-Golgi vesicle. Post-translationally, palmitoylated via thioester bonds. These palmitoylations may induce disruption of the C-terminus transmembrane. This would result in the reorientation of E2 C-terminus from lumenal to cytoplasmic side. In terms of processing, N-glycosylated. Palmitoylated via thioester bonds.

The protein resides in the virion. Its subcellular location is the host cytoplasm. It is found in the host cell membrane. It localises to the host nucleus. The protein localises to the virion membrane. The protein resides in the host Golgi apparatus. Its subcellular location is the host trans-Golgi network. It is found in the host endoplasmic reticulum. The catalysed reaction is Autocatalytic release of the core protein from the N-terminus of the togavirus structural polyprotein by hydrolysis of a -Trp-|-Ser- bond.. Functionally, forms an icosahedral capsid with a T=4 symmetry composed of 240 copies of the capsid protein surrounded by a lipid membrane through which penetrate 80 spikes composed of trimers of E1-E2 heterodimers. The capsid protein binds to the viral RNA genome at a site adjacent to a ribosome binding site for viral genome translation following genome release. Possesses a protease activity that results in its autocatalytic cleavage from the nascent structural protein. Following its self-cleavage, the capsid protein transiently associates with ribosomes, and within several minutes the protein binds to viral RNA and rapidly assembles into icosahedric core particles. The resulting nucleocapsid eventually associates with the cytoplasmic domain of the spike glycoprotein E2 at the cell membrane, leading to budding and formation of mature virions. In case of infection, new virions attach to target cells and after clathrin-mediated endocytosis their membrane fuses with the host endosomal membrane. This leads to the release of the nucleocapsid into the cytoplasm, followed by an uncoating event necessary for the genomic RNA to become accessible. The uncoating might be triggered by the interaction of capsid proteins with ribosomes. Binding of ribosomes would release the genomic RNA since the same region is genomic RNA-binding and ribosome-binding. Specifically inhibits interleukin-1 receptor-associated kinase 1/IRAK1-dependent signaling during viral entry, representing a means by which the alphaviruses may evade innate immune detection and activation prior to viral gene expression. Its function is as follows. Provides the signal sequence for the translocation of the precursor of protein E3/E2 to the host endoplasmic reticulum. Furin-cleaved E3 remains associated with spike glycoprotein E1 and mediates pH protection of the latter during the transport via the secretory pathway. After virion release from the host cell, the assembly protein E3 is gradually released in the extracellular space. Plays a role in viral attachment to target host cell, by binding to the cell receptor MXRA8. The host LDLR may also act as a cell receptor for viral entry. Synthesized as a p62 precursor which is processed by furin at the cell membrane just before virion budding, giving rise to E2-E1 heterodimer. The p62-E1 heterodimer is stable, whereas E2-E1 is unstable and dissociate at low pH. p62 is processed at the last step, presumably to avoid E1 fusion activation before its final export to cell surface. E2 C-terminus contains a transitory transmembrane that would be disrupted by palmitoylation, resulting in reorientation of the C-terminal tail from lumenal to cytoplasmic side. This step is critical since E2 C-terminus is involved in budding by interacting with capsid proteins. This release of E2 C-terminus in cytoplasm occurs lately in protein export, and precludes premature assembly of particles at the endoplasmic reticulum membrane. In terms of biological role, acts as a viroporin that participates in virus glycoprotein processing and transport to the plasma membrane, cell permeabilization and budding of viral particles. Disrupts the calcium homeostasis of the cell, probably at the endoplasmic reticulum level. This leads to cytoplasmic calcium elevation. Because of its lipophilic properties, the 6K protein is postulated to influence the selection of lipids that interact with the transmembrane domains of the glycoproteins, which, in turn, affects the deformability of the bilayer required for the extreme curvature that occurs as budding proceeds. Present in low amount in virions, about 3% compared to viral glycoproteins. Functionally, class II viral fusion protein. Fusion activity is inactive as long as E1 is bound to E2 in mature virion. After virus attachment to target cell via host MXRA8 and endocytosis, acidification of the endosome induce dissociation of E1/E2 heterodimer and concomitant trimerization of the E1 subunits. This E1 trimer is fusion active, and promotes release of viral nucleocapsid in cytoplasm after endosome and viral membrane fusion. Efficient fusion requires the presence of cholesterol and sphingolipid in the target membrane. This chain is Structural polyprotein, found in Aedes vexans (Inland floodwater mosquito).